The following is an 86-amino-acid chain: U15-lycotoxin-Ls1c (86 aa).

Positions 1 to 20 are cleaved as a signal peptide; that stretch reads MNSKIFAVLLLLAFLSCVLS. A WAP domain is found at 21–66; it reads DQYCPKSSITACKKMNIRNDCCKDDDCTGGSWCCATPCGNICKYPT. Intrachain disulfides connect Cys24-Cys54, Cys32-Cys58, Cys41-Cys53, Cys42-Cys80, and Cys47-Cys62.

The protein belongs to the venom protein 11 family. 01 (wap-1) subfamily. In terms of processing, contains 5 disulfide bonds. Expressed by the venom gland.

Its subcellular location is the secreted. Its function is as follows. Has antibacterial activity. The sequence is that of U15-lycotoxin-Ls1c from Lycosa singoriensis (Wolf spider).